We begin with the raw amino-acid sequence, 337 residues long: Perakine reductase (337 aa).

Y57 acts as the Proton donor in catalysis. Position 126 (H126) interacts with substrate. 205–214 (SPIGRGLFAG) provides a ligand contact to NADP(+).

It belongs to the aldo/keto reductase family.

The enzyme catalyses raucaffrinoline + NADP(+) = perakine + NADPH + H(+). Aldo-keto reductase involved in the biosynthesis of monoterpenoid indole alkaloids. Broad substrate specificity enzyme with a high selectivity in the group of alkaloids. Can use perakine, 19(S),20(R)-dihydro-peraksine-17,21-al, cinnamic aldehyde, p-coumaric aldehyde and 3-(3,4,5-trimethoxyphenyl)propanal as substrates, but not ketosteroids such as progesterone. NADPH could not be replaced by NADH. This is Perakine reductase (PR) from Rauvolfia serpentina (Serpentine wood).